The chain runs to 1887 residues: Protein TIC 214 (1887 aa).

6 helical membrane-spanning segments follow: residues 18-38, 64-84, 87-107, 124-144, 172-192, and 221-241; these read IINS…FSIG, FITG…HLAL, PHTI…WNNH, LSIQ…HFIL, VGWL…LVWI, and IFSI…PSPI. Disordered regions lie at residues 248 to 300, 786 to 805, and 1569 to 1603; these read EASK…EGWD, EEQT…DNKR, and LPSN…NLSP. The span at 256 to 268 shows a compositional bias: acidic residues; the sequence is VESEEERDVEIET. Residues 775–816 adopt a coiled-coil conformation; it reads KEREFKILESREEQTKREEKKEKDKKEDNKRKEQARIAIEEA. A compositionally biased stretch (basic and acidic residues) spans 1578-1597; that stretch reads RSQETKEPPSQRERGSDIEN.

It belongs to the TIC214 family. As to quaternary structure, part of the Tic complex.

The protein resides in the plastid. It is found in the chloroplast inner membrane. Involved in protein precursor import into chloroplasts. May be part of an intermediate translocation complex acting as a protein-conducting channel at the inner envelope. In Solanum bulbocastanum (Wild potato), this protein is Protein TIC 214.